The chain runs to 415 residues: Metal tolerance protein 5 (415 aa).

Residues 1–124 (MAAAVAGGGE…REKVARSETL (124 aa)) are Cytoplasmic-facing. A helical membrane pass occupies residues 125 to 145 (AIRLSNIANMVLFAAKVYASV). The Vacuolar segment spans residues 146-150 (RSGSL). The helical transmembrane segment at 151-171 (AIIASTLDSLLDLLSGFILWF) threads the bilayer. Residues 172 to 192 (TAFSMQTPNPYRYPIGKKRMQ) lie on the Cytoplasmic side of the membrane. Residues 193 to 213 (PLGILVFASVMATLGLQIILE) form a helical membrane-spanning segment. The Vacuolar portion of the chain corresponds to 214-232 (SVRSLLSDGDEFSLTKEQE). Residues 233 to 253 (KWVVDIMLAVTLVKLALVLYC) traverse the membrane as a helical segment. Residues 254–268 (RTFTNEIVKAYAQDH) are Cytoplasmic-facing. Residues 269-291 (FFDVITNMIGLVAALLATYIEGW) traverse the membrane as a helical segment. Residues 292-293 (ID) lie on the Vacuolar side of the membrane. The chain crosses the membrane as a helical span at residues 294-313 (PVGAIILAIYTIRTWSMTVL). At 314-415 (ENVHSLVGQS…RPEHALSHEK (102 aa)) the chain is on the cytoplasmic side.

This sequence belongs to the cation diffusion facilitator (CDF) transporter (TC 2.A.4) family. SLC30A subfamily.

It is found in the vacuole membrane. Its function is as follows. Involved in sequestration of excess metal in the cytoplasm into vacuoles to maintain metal homeostasis. The protein is Metal tolerance protein 5 (MTP5) of Oryza sativa subsp. japonica (Rice).